Reading from the N-terminus, the 467-residue chain is Neuromedin-K receptor (467 aa).

Residues 1 to 86 (MDSFAAAETW…TNQFVQPSWR (86 aa)) lie on the Extracellular side of the membrane. Residues Asn23, Asn50, and Asn75 are each glycosylated (N-linked (GlcNAc...) asparagine). A helical membrane pass occupies residues 87–109 (IALWSLAYGVVVAVAVFGNLIVI). At 110–119 (WIILAHKRMR) the chain is on the cytoplasmic side. The helical transmembrane segment at 120–141 (TVTNYFLVNLAFSDASMAAFNT) threads the bilayer. The Extracellular segment spans residues 142–161 (LVNFIYALHSEWYFGANYCR). Cys160 and Cys235 form a disulfide bridge. Residues 162–183 (FQNFFPITAVFASIYSMTAIAV) traverse the membrane as a helical segment. Topologically, residues 184 to 203 (DRYMAIIDPLKPRLSATATK) are cytoplasmic. Residues 204–224 (IVIGSIWILAFLLALPQCLYS) traverse the membrane as a helical segment. Topologically, residues 225–247 (KTKVMPGRTLCYVQWPEGPKQHF) are extracellular. Residues 248–272 (IYHIIVIILVYCFPLLIMGITYTIV) traverse the membrane as a helical segment. Residues 273 to 301 (GITLWGGEIPGDTCDKYHEQLKAKRKVVK) are Cytoplasmic-facing. The helical transmembrane segment at 302–323 (MMIIVVVTFAICWLPYHIYFIL) threads the bilayer. The Extracellular segment spans residues 324–336 (TAIYQQLNRWKYI). Residues 337 to 361 (QQVYLASFWLAMSSTMYNPIIYCCL) form a helical membrane-spanning segment. Residues 362–467 (NKRFRAGFKR…SPYTSMEEYS (106 aa)) lie on the Cytoplasmic side of the membrane. A lipid anchor (S-palmitoyl cysteine) is attached at Cys376. Residues 416–467 (DPSDADNTRSSRKKRATPGDPNFNGCSRRNSKSASTTSSFISSPYTSMEEYS) are disordered. A compositionally biased stretch (low complexity) spans 447–467 (KSASTTSSFISSPYTSMEEYS).

This sequence belongs to the G-protein coupled receptor 1 family.

The protein localises to the cell membrane. Its function is as follows. This is a receptor for the tachykinin neuropeptide neuromedin-K (neurokinin B). It is associated with G proteins that activate a phosphatidylinositol-calcium second messenger system. This chain is Neuromedin-K receptor (TACR3), found in Oryctolagus cuniculus (Rabbit).